We begin with the raw amino-acid sequence, 906 residues long: Centromere protein C (906 aa).

2 stretches are compositionally biased toward polar residues: residues 56-74 (SLTS…SSSK) and 87-96 (SSRTGEASLQ). 2 disordered regions span residues 56-115 (SLTS…NEVH) and 141-169 (QKAA…NKNI). Residues Ser71 and Ser94 each carry the phosphoserine modification. The segment covering 97–108 (ASAEPSEAAGGS) has biased composition (low complexity). Residues Lys150 and Lys182 each participate in a glycyl lysine isopeptide (Lys-Gly) (interchain with G-Cter in SUMO2) cross-link. The segment at 197–224 (VEDNLSKGQEGTSSEITQKRDDLSSDVQ) is disordered. Residues 202–212 (SKGQEGTSSEI) are compositionally biased toward polar residues. Positions 228 to 242 (KKNFSELFLETVKRK) match the Nuclear localization signal motif. Residues Lys229, Lys240, Lys242, and Lys266 each participate in a glycyl lysine isopeptide (Lys-Gly) (interchain with G-Cter in SUMO2) cross-link. Disordered stretches follow at residues 294–320 (RHLS…KSHS), 341–596 (AQLS…SLAI), and 623–671 (EYTS…EQDQ). A phosphoserine mark is found at Ser302, Ser344, Ser363, and Ser404. The span at 402 to 424 (GQSSWENSNVSNTGQDKLQINSK) shows a compositional bias: polar residues. Residues 426–450 (NMKDCEEVRNEPNPKKQKPALENKK) are compositionally biased toward basic and acidic residues. Positions 449–466 (KKKTNSTQTNKEKSGKKF) match the Nuclear localization signal motif. Residues 465 to 474 (KFFSGGSKNK) are compositionally biased toward low complexity. The span at 481 to 494 (TLTSRRSCRISQRP) shows a compositional bias: polar residues. Ser495 carries the phosphoserine modification. Residues 496 to 512 (EWWRVKSDESSVDRNPS) are compositionally biased toward basic and acidic residues. Lys501 is covalently cross-linked (Glycyl lysine isopeptide (Lys-Gly) (interchain with G-Cter in SUMO2)). Residue Ser505 is modified to Phosphoserine. Over residues 523 to 546 (NKKKQTKRNHVSKRAGKKPGSSKR) the composition is skewed to basic residues. The Nuclear localization signal signature appears at 525–540 (KKQTKRNHVSKRAGKK). Residues 626-637 (SKTQMESASNSE) show a composition bias toward polar residues. Residue Lys640 forms a Glycyl lysine isopeptide (Lys-Gly) (interchain with G-Cter in SUMO2) linkage. Ser647 and Ser673 each carry phosphoserine. Lys692 participates in a covalent cross-link: Glycyl lysine isopeptide (Lys-Gly) (interchain with G-Cter in SUMO2). Positions 702–724 (VRRSNRIRLKPLEYWRGERVDYQ) are MIF2 homology domain II. A phosphoserine mark is found at Ser728 and Ser737. Positions 744-762 (KIKAQRNLGKVNKKVTKKP) match the Nuclear localization signal motif. A Glycyl lysine isopeptide (Lys-Gly) (interchain with G-Cter in SUMO2) cross-link involves residue Lys770. The MIF2 homology domain III stretch occupies residues 853–906 (LVFYVNFGDLLCTLHETPYKLTTGDSFYVPSGNHYNIKNLLNVESSLLFTQIKR).

This sequence belongs to the CENP-C/MIF2 family. As to quaternary structure, oligomer. Component of the CENPA-NAC complex, at least composed of CENPA, CENPC, CENPH, CENPM, CENPN, CENPT and CENPU. The CENPA-NAC complex interacts with the CENPA-CAD complex, composed of CENPI, CENPK, CENPL, CENPO, CENPP, CENPQ, CENPR and CENPS. Binds to DAXX. Interacts with DNMT3B. Interacts directly with CENPA. Identified in a centromere complex containing histones H2A, H2B and H4, and at least CENPA, CENPB, CENPC, CENPT, CENPN, HJURP, SUPT16H, SSRP1 and RSF1. Interacts with MEIKIN.

The protein resides in the nucleus. It is found in the chromosome. It localises to the centromere. The protein localises to the kinetochore. In terms of biological role, component of the CENPA-NAC (nucleosome-associated) complex, a complex that plays a central role in assembly of kinetochore proteins, mitotic progression and chromosome segregation. The CENPA-NAC complex recruits the CENPA-CAD (nucleosome distal) complex and may be involved in incorporation of newly synthesized CENPA into centromeres. CENPC recruits DNA methylation and DNMT3B to both centromeric and pericentromeric satellite repeats and regulates the histone code in these regions. This Mus musculus (Mouse) protein is Centromere protein C (Cenpc).